A 341-amino-acid chain; its full sequence is UDP-3-O-acylglucosamine N-acyltransferase (341 aa).

His240 functions as the Proton acceptor in the catalytic mechanism.

The protein belongs to the transferase hexapeptide repeat family. LpxD subfamily. In terms of assembly, homotrimer.

The enzyme catalyses a UDP-3-O-[(3R)-3-hydroxyacyl]-alpha-D-glucosamine + a (3R)-hydroxyacyl-[ACP] = a UDP-2-N,3-O-bis[(3R)-3-hydroxyacyl]-alpha-D-glucosamine + holo-[ACP] + H(+). It functions in the pathway bacterial outer membrane biogenesis; LPS lipid A biosynthesis. Catalyzes the N-acylation of UDP-3-O-acylglucosamine using 3-hydroxyacyl-ACP as the acyl donor. Is involved in the biosynthesis of lipid A, a phosphorylated glycolipid that anchors the lipopolysaccharide to the outer membrane of the cell. This Cellvibrio japonicus (strain Ueda107) (Pseudomonas fluorescens subsp. cellulosa) protein is UDP-3-O-acylglucosamine N-acyltransferase.